Reading from the N-terminus, the 527-residue chain is Nucleus accumbens-associated protein 1 (527 aa).

The BTB domain occupies Cys30–Val94. Residues Gln131–Trp153 are disordered. Polar residues predominate over residues Ser141–Gly152. Lys167 is covalently cross-linked (Glycyl lysine isopeptide (Lys-Gly) (interchain with G-Cter in SUMO1); alternate). A Glycyl lysine isopeptide (Lys-Gly) (interchain with G-Cter in SUMO2); alternate cross-link involves residue Lys167. Residue Lys183 forms a Glycyl lysine isopeptide (Lys-Gly) (interchain with G-Cter in SUMO2) linkage. The residue at position 188 (Ser188) is a Phosphoserine. The disordered stretch occupies residues Asp210–Gly292. Over residues Ala225–Gly251 the composition is skewed to low complexity. Residues Gly255 to Ser277 are compositionally biased toward polar residues. The residue at position 259 (Ser259) is a Phosphoserine; by PKC. Positions Glu281 to Gly292 are enriched in acidic residues. Glycyl lysine isopeptide (Lys-Gly) (interchain with G-Cter in SUMO2) cross-links involve residues Lys318, Lys452, Lys480, Lys483, and Lys498. The BEN domain occupies Gly374–Val471.

As to quaternary structure, homooligomer; mediated by the BTB domain. Interacts with HDAC3 and HDAC4. Interacts (via BTB domain) with CUL3, PSMD7 and RCOR1. In terms of tissue distribution, overexpressed in several types of carcinomas including ovarian serous carcinomas. Expression levels positively correlate with tumor recurrence in ovarian serous carcinomas, and intense immunoreactivity in primary ovarian tumors predicts early recurrence. Up-regulated in ovarian carcinomas after chemotherapy, suggesting a role in development of chemotherapy resistance in ovarian cancer.

The protein resides in the nucleus. It is found in the cytoplasm. Its function is as follows. Functions as a transcriptional repressor. Seems to function as a transcriptional corepressor in neuronal cells through recruitment of HDAC3 and HDAC4. Contributes to tumor progression, and tumor cell proliferation and survival. This may be mediated at least in part through repressing transcriptional activity of GADD45GIP1. Required for recruiting the proteasome from the nucleus to the cytoplasm and dendritic spines. The chain is Nucleus accumbens-associated protein 1 (NACC1) from Homo sapiens (Human).